Consider the following 76-residue polypeptide: DNA-directed RNA polymerase subunit Rpo5 (76 aa).

This sequence belongs to the archaeal Rpo5/eukaryotic RPB5 RNA polymerase subunit family. In terms of assembly, part of the RNA polymerase complex.

The protein resides in the cytoplasm. It carries out the reaction RNA(n) + a ribonucleoside 5'-triphosphate = RNA(n+1) + diphosphate. In terms of biological role, DNA-dependent RNA polymerase (RNAP) catalyzes the transcription of DNA into RNA using the four ribonucleoside triphosphates as substrates. The protein is DNA-directed RNA polymerase subunit Rpo5 of Archaeoglobus fulgidus (strain ATCC 49558 / DSM 4304 / JCM 9628 / NBRC 100126 / VC-16).